The following is a 276-amino-acid chain: 4-diphosphocytidyl-2-C-methyl-D-erythritol kinase (276 aa).

Lys-13 is an active-site residue. Position 94–104 (94–104 (PHAGGIGGGSA)) interacts with ATP. The active site involves Asp-131.

The protein belongs to the GHMP kinase family. IspE subfamily.

It carries out the reaction 4-CDP-2-C-methyl-D-erythritol + ATP = 4-CDP-2-C-methyl-D-erythritol 2-phosphate + ADP + H(+). Its pathway is isoprenoid biosynthesis; isopentenyl diphosphate biosynthesis via DXP pathway; isopentenyl diphosphate from 1-deoxy-D-xylulose 5-phosphate: step 3/6. In terms of biological role, catalyzes the phosphorylation of the position 2 hydroxy group of 4-diphosphocytidyl-2C-methyl-D-erythritol. The chain is 4-diphosphocytidyl-2-C-methyl-D-erythritol kinase from Jannaschia sp. (strain CCS1).